Consider the following 802-residue polypeptide: Lon protease (802 aa).

The 195-residue stretch at 17–211 (SIVMPLFEVV…LFLHILTKHK (195 aa)) folds into the Lon N-terminal domain. 363–370 (GPPGTGKT) provides a ligand contact to ATP. A Lon proteolytic domain is found at 600 to 780 (ENVPGVVTGL…EEVLREALDI (181 aa)). Residues Ser-686 and Lys-729 contribute to the active site.

This sequence belongs to the peptidase S16 family. As to quaternary structure, homohexamer. Organized in a ring with a central cavity.

The protein localises to the cytoplasm. The catalysed reaction is Hydrolysis of proteins in presence of ATP.. Functionally, ATP-dependent serine protease that mediates the selective degradation of mutant and abnormal proteins as well as certain short-lived regulatory proteins. Required for cellular homeostasis and for survival from DNA damage and developmental changes induced by stress. Degrades polypeptides processively to yield small peptide fragments that are 5 to 10 amino acids long. Binds to DNA in a double-stranded, site-specific manner. The protein is Lon protease of Methanosarcina barkeri (strain Fusaro / DSM 804).